Here is a 605-residue protein sequence, read N- to C-terminus: uncharacterized protein (605 aa).

Residues 56–78 (ILWSSIAAACVILFAAYKTGAYF) traverse the membrane as a helical segment.

It is found in the cell membrane. This is an uncharacterized protein from Bacillus subtilis (strain 168).